The primary structure comprises 184 residues: Protein FAM89A (184 aa).

A disordered region spans residues 148–184 (YFQEQNSLHDRRDRGPPRDLSLPVSSLSSSDWILESI). The segment covering 154-164 (SLHDRRDRGPP) has biased composition (basic and acidic residues). Low complexity predominate over residues 167–184 (LSLPVSSLSSSDWILESI).

This sequence belongs to the FAM89 family.

In Homo sapiens (Human), this protein is Protein FAM89A (FAM89A).